The chain runs to 285 residues: Putative pyruvate, phosphate dikinase regulatory protein (285 aa).

ADP is bound at residue 165 to 172 (GVSRTSKT).

The protein belongs to the pyruvate, phosphate/water dikinase regulatory protein family. PDRP subfamily.

It carries out the reaction N(tele)-phospho-L-histidyl/L-threonyl-[pyruvate, phosphate dikinase] + ADP = N(tele)-phospho-L-histidyl/O-phospho-L-threonyl-[pyruvate, phosphate dikinase] + AMP + H(+). It catalyses the reaction N(tele)-phospho-L-histidyl/O-phospho-L-threonyl-[pyruvate, phosphate dikinase] + phosphate + H(+) = N(tele)-phospho-L-histidyl/L-threonyl-[pyruvate, phosphate dikinase] + diphosphate. Functionally, bifunctional serine/threonine kinase and phosphorylase involved in the regulation of the pyruvate, phosphate dikinase (PPDK) by catalyzing its phosphorylation/dephosphorylation. The sequence is that of Putative pyruvate, phosphate dikinase regulatory protein from Lactobacillus delbrueckii subsp. bulgaricus (strain ATCC 11842 / DSM 20081 / BCRC 10696 / JCM 1002 / NBRC 13953 / NCIMB 11778 / NCTC 12712 / WDCM 00102 / Lb 14).